The following is a 2155-amino-acid chain: Alpha-tectorin (2155 aa).

The first 22 residues, 1-22 (MNYSSFLRIWVSFIFALVQHQA), serve as a signal peptide directing secretion. Residues Asn-34, Asn-187, Asn-215, Asn-278, Asn-455, Asn-506, Asn-528, and Asn-560 are each glycosylated (N-linked (GlcNAc...) asparagine). Residues 98–252 (PFWADVHNGI…GRWAFKVDGK (155 aa)) form the NIDO domain. The 55-residue stretch at 260–314 (CTSRGQFLRRGEVFWDDLNCTVKCRCLDFNNEIYCQEASCSPYEVCEPKGKFFYC) folds into the VWFC domain. The VWFD 1 domain occupies 320-500 (STCVVFGEPH…RVYHADWKCD (181 aa)). 2 cysteine pairs are disulfide-bonded: Cys-322-Cys-461 and Cys-344-Cys-499. The region spanning 597–650 (CPSFSHYSVCTSSCPDTCSDLTASRNCATPCTEGCECNQGFVLSTSQCVPLHKC) is the TIL 1 domain. 9 N-linked (GlcNAc...) asparagine glycosylation sites follow: Asn-670, Asn-687, Asn-813, Asn-843, Asn-855, Asn-898, Asn-920, Asn-931, and Asn-949. Residues 711 to 886 (TVCLLSQNQV…SWTTFEEICN (176 aa)) form the VWFD 2 domain. Cys-713 and Cys-849 are oxidised to a cystine. In terms of domain architecture, TIL 2 spans 984-1036 (CPENSHFEECITCTETCETLTLGPICVDSCSEGCQCDEGYALLGSQCVTRSEC). N-linked (GlcNAc...) asparagine glycans are attached at residues Asn-1048, Asn-1235, and Asn-1364. A VWFD 3 domain is found at 1098 to 1278 (ASCIVSGYGH…SWVKRDTFCQ (181 aa)). Cystine bridges form between Cys-1100–Cys-1241 and Cys-1122–Cys-1277. Residues 1372–1425 (CPPNSHYESCVSVCQPRCAAIRLKSDCSHYCVEGCHCDAGYVLNGKSCILPHSC) enclose the TIL 3 domain. In terms of domain architecture, VWFD 4 spans 1485-1666 (SYCLAAGGGV…QKRPLAPSCN (182 aa)). Cystine bridges form between Cys-1487–Cys-1622, Cys-1509–Cys-1665, Cys-1717–Cys-1775, Cys-1741–Cys-1784, Cys-1786–Cys-1818, Cys-1806–Cys-1898, and Cys-1837–Cys-1857. 10 N-linked (GlcNAc...) asparagine glycosylation sites follow: Asn-1538, Asn-1565, Asn-1756, Asn-1772, Asn-1794, Asn-1851, Asn-1864, Asn-1880, Asn-1920, and Asn-1939. A ZP domain is found at 1805–2059 (TCKAAQMEVS…YSCKITCPHN (255 aa)). Disulfide bonds link Cys-1980-Cys-2040, Cys-2001-Cys-2056, and Cys-2045-Cys-2052. Asn-2091 carries GPI-anchor amidated asparagine lipidation. Residues 2092 to 2155 (GGCEQICTSR…HFVYKSGTTS (64 aa)) constitute a propeptide, removed in mature form.

May form homomeric filament after self-association or heteromeric filament after association with beta-tectorin. Interacts with CEACAM16. The presence of a hydrophobic C-terminus preceded by a potential cleavage site strongly suggests that tectorins are synthesized as glycosylphosphatidylinositol-linked, membrane-bound precursors. Tectorins are targeted to the apical surface of the inner ear epithelia by the lipid and proteolytically released into the extracellular compartment.

It is found in the cell membrane. Its subcellular location is the secreted. The protein resides in the extracellular space. The protein localises to the extracellular matrix. One of the major non-collagenous components of the tectorial membrane. The tectorial membrane is an extracellular matrix of the inner ear that covers the neuroepithelium of the cochlea and contacts the stereocilia bundles of specialized sensory hair cells. Sound induces movement of these hair cells relative to the tectorial membrane, deflects the stereocilia and leads to fluctuations in hair-cell membrane potential, transducing sound into electrical signals. This is Alpha-tectorin (TECTA) from Homo sapiens (Human).